The chain runs to 66 residues: Large ribosomal subunit protein bL33c (66 aa).

Belongs to the bacterial ribosomal protein bL33 family.

The protein resides in the plastid. It localises to the chloroplast. The sequence is that of Large ribosomal subunit protein bL33c from Adiantum capillus-veneris (Maidenhair fern).